Consider the following 328-residue polypeptide: Ribosomal protein L11 methyltransferase (328 aa).

Residues threonine 153, glycine 174, aspartate 196, and asparagine 263 each coordinate S-adenosyl-L-methionine.

Belongs to the methyltransferase superfamily. PrmA family.

It localises to the cytoplasm. It carries out the reaction L-lysyl-[protein] + 3 S-adenosyl-L-methionine = N(6),N(6),N(6)-trimethyl-L-lysyl-[protein] + 3 S-adenosyl-L-homocysteine + 3 H(+). Its function is as follows. Methylates ribosomal protein L11. The protein is Ribosomal protein L11 methyltransferase of Chloroflexus aurantiacus (strain ATCC 29366 / DSM 635 / J-10-fl).